A 318-amino-acid chain; its full sequence is Ubiquitin-like domain-containing CTD phosphatase 1 (318 aa).

Residues 3–81 (LSLIIKWGGQ…IMMMGTREES (79 aa)) form the Ubiquitin-like domain. Residues 133–294 (PREGKKLLVL…LKLTQYLKEI (162 aa)) enclose the FCP1 homology domain. Mg(2+)-binding residues include Asp-143, Asp-145, and Asp-253.

Requires Mg(2+) as cofactor.

It localises to the nucleus. It catalyses the reaction O-phospho-L-seryl-[protein] + H2O = L-seryl-[protein] + phosphate. The catalysed reaction is O-phospho-L-threonyl-[protein] + H2O = L-threonyl-[protein] + phosphate. Its function is as follows. Dephosphorylates 26S nuclear proteasomes, thereby decreasing their proteolytic activity. Recruited to the 19S regulatory particle of the 26S proteasome where it dephosphorylates 19S component PSMC2 which impairs PSMC2 ATPase activity and disrupts 26S proteasome assembly. Has also been reported to stimulate the proteolytic activity of the 26S proteasome. The chain is Ubiquitin-like domain-containing CTD phosphatase 1 (UBLCP1) from Gallus gallus (Chicken).